Here is a 197-residue protein sequence, read N- to C-terminus: Probable chorismate pyruvate-lyase 2 (197 aa).

The segment covering 1–14 (MRFDAADAHWRETP) has biased composition (basic and acidic residues). The tract at residues 1-23 (MRFDAADAHWRETPRPGASSAQK) is disordered. Substrate is bound by residues arginine 73, leucine 111, and glutamate 173.

This sequence belongs to the UbiC family.

The protein resides in the cytoplasm. It carries out the reaction chorismate = 4-hydroxybenzoate + pyruvate. It functions in the pathway cofactor biosynthesis; ubiquinone biosynthesis. Removes the pyruvyl group from chorismate, with concomitant aromatization of the ring, to provide 4-hydroxybenzoate (4HB) for the ubiquinone pathway. This Burkholderia pseudomallei (strain 1710b) protein is Probable chorismate pyruvate-lyase 2.